The sequence spans 134 residues: Fatty acid-binding protein 5 (134 aa).

The short motif at 23–33 is the Nuclear localization signal element; sequence KELGVGMAMRK. Residues R109 and 129–131 contribute to the hexadecanoate site; that span reads RVY. N-eicosanoyl ethanolamine is bound by residues R109 and Y131. 129-131 is a binding site for (9Z,12Z)-octadecadienoate; it reads RVY.

The protein belongs to the calycin superfamily. Fatty-acid binding protein (FABP) family. Monomer.

It localises to the cytoplasm. Its subcellular location is the nucleus. It is found in the synapse. The protein localises to the postsynaptic density. The protein resides in the secreted. It catalyses the reaction hexadecanoate(out) = hexadecanoate(in). The enzyme catalyses (9Z,12Z)-octadecadienoate(out) = (9Z,12Z)-octadecadienoate(in). The catalysed reaction is (9Z)-octadecenoate(out) = (9Z)-octadecenoate(in). Intracellular carrier for long-chain fatty acids and related active lipids, such as endocannabinoids, that regulate the metabolism and actions of the ligands they bind. In addition to the cytosolic transport, selectively delivers specific fatty acids from the cytosol to the nucleus, wherein they activate nuclear receptors. Delivers retinoic acid to the nuclear receptor peroxisome proliferator-activated receptor delta; which promotes proliferation and survival. May also serve as a synaptic carrier of endocannabinoid at central synapses and thus controls retrograde endocannabinoid signaling. Modulates inflammation by regulating PTGES induction via NF-kappa-B activation, and prostaglandin E2 (PGE2) biosynthesis during inflammation. Has the highest binding affinity for docosahexaenoic acid (DHA) and decreasing relative affinity for eicosapentaenoic acid (EPA), alpha-linolenic acid (ALA), oleic acid, palmitic acid, linoleic acid and stearic acid, respectively. The polypeptide is Fatty acid-binding protein 5 (Pygoscelis papua (Gentoo penguin)).